A 59-amino-acid chain; its full sequence is Small ribosomal subunit protein bS21 (59 aa).

It belongs to the bacterial ribosomal protein bS21 family.

In Acaryochloris marina (strain MBIC 11017), this protein is Small ribosomal subunit protein bS21.